We begin with the raw amino-acid sequence, 343 residues long: S-adenosylmethionine:tRNA ribosyltransferase-isomerase (343 aa).

The protein belongs to the QueA family. As to quaternary structure, monomer.

The protein resides in the cytoplasm. It carries out the reaction 7-aminomethyl-7-carbaguanosine(34) in tRNA + S-adenosyl-L-methionine = epoxyqueuosine(34) in tRNA + adenine + L-methionine + 2 H(+). It participates in tRNA modification; tRNA-queuosine biosynthesis. Functionally, transfers and isomerizes the ribose moiety from AdoMet to the 7-aminomethyl group of 7-deazaguanine (preQ1-tRNA) to give epoxyqueuosine (oQ-tRNA). This chain is S-adenosylmethionine:tRNA ribosyltransferase-isomerase, found in Natranaerobius thermophilus (strain ATCC BAA-1301 / DSM 18059 / JW/NM-WN-LF).